A 149-amino-acid polypeptide reads, in one-letter code: MRAVLQRVTQAHVSVDEEIVGAIGPGLMVLLGVEQGDGPQDAAQLAKKTAELRVFEDAEGKMNRSVEDIGGQLLVVSQFTLAADCRKGRRPGFSRAAAADTANSLYLDYIEQLRQRGLTVATGRFQAMMQVHLVNDGPVTFLLDSHKVF.

The short motif at 137 to 138 (GP) is the Gly-cisPro motif, important for rejection of L-amino acids element.

The protein belongs to the DTD family. As to quaternary structure, homodimer.

It is found in the cytoplasm. The enzyme catalyses glycyl-tRNA(Ala) + H2O = tRNA(Ala) + glycine + H(+). It catalyses the reaction a D-aminoacyl-tRNA + H2O = a tRNA + a D-alpha-amino acid + H(+). Functionally, an aminoacyl-tRNA editing enzyme that deacylates mischarged D-aminoacyl-tRNAs. Also deacylates mischarged glycyl-tRNA(Ala), protecting cells against glycine mischarging by AlaRS. Acts via tRNA-based rather than protein-based catalysis; rejects L-amino acids rather than detecting D-amino acids in the active site. By recycling D-aminoacyl-tRNA to D-amino acids and free tRNA molecules, this enzyme counteracts the toxicity associated with the formation of D-aminoacyl-tRNA entities in vivo and helps enforce protein L-homochirality. In Syntrophotalea carbinolica (strain DSM 2380 / NBRC 103641 / GraBd1) (Pelobacter carbinolicus), this protein is D-aminoacyl-tRNA deacylase.